The sequence spans 285 residues: Bifunctional protein FolD (285 aa).

NADP(+) contacts are provided by residues 166-168 (GAS) and Ile232.

It belongs to the tetrahydrofolate dehydrogenase/cyclohydrolase family. As to quaternary structure, homodimer.

It carries out the reaction (6R)-5,10-methylene-5,6,7,8-tetrahydrofolate + NADP(+) = (6R)-5,10-methenyltetrahydrofolate + NADPH. It catalyses the reaction (6R)-5,10-methenyltetrahydrofolate + H2O = (6R)-10-formyltetrahydrofolate + H(+). It functions in the pathway one-carbon metabolism; tetrahydrofolate interconversion. Catalyzes the oxidation of 5,10-methylenetetrahydrofolate to 5,10-methenyltetrahydrofolate and then the hydrolysis of 5,10-methenyltetrahydrofolate to 10-formyltetrahydrofolate. The polypeptide is Bifunctional protein FolD (Pseudoalteromonas atlantica (strain T6c / ATCC BAA-1087)).